The sequence spans 164 residues: Phosphatidyl-N-methylethanolamine N-methyltransferase (164 aa).

An intramembrane region (helical) is located at residues 1–21 (MGLLAAIGVLLPFPFYWWLWT). Residues 22–30 (NAQSWVNLC) lie on the Lumenal side of the membrane. A helical transmembrane segment spans residues 31 to 52 (GRERDPSTVMARVSHVLKAAQL). At 53 to 69 (LSLFSVASLSWPPPLYF) the chain is on the cytoplasmic side. The chain crosses the membrane as a helical span at residues 70–90 (WPLMAFGQFLNFRVYQLLGEA). Residue 74–76 (AFG) coordinates S-adenosyl-L-methionine. Residues 91-131 (GTYYGVRFGKNIPWVTEFPFGVIRDPQYVGSIMSLLACLSW) lie on the Lumenal side of the membrane. The chain crosses the membrane as a helical span at residues 132–151 (VPFQYILLWSLGYVFMMFLE). The Cytoplasmic portion of the chain corresponds to 152 to 164 (SKEDPNARAKSIS). 154-155 (ED) is a binding site for S-adenosyl-L-methionine.

The protein belongs to the class VI-like SAM-binding methyltransferase superfamily. PEMT/PEM2 methyltransferase family.

It localises to the endoplasmic reticulum membrane. It carries out the reaction a 1,2-diacyl-sn-glycero-3-phospho-N-methylethanolamine + S-adenosyl-L-methionine = a 1,2-diacyl-sn-glycero-3-phospho-N,N-dimethylethanolamine + S-adenosyl-L-homocysteine + H(+). It catalyses the reaction a 1,2-diacyl-sn-glycero-3-phospho-N,N-dimethylethanolamine + S-adenosyl-L-methionine = a 1,2-diacyl-sn-glycero-3-phosphocholine + S-adenosyl-L-homocysteine + H(+). It functions in the pathway phospholipid metabolism; phosphatidylcholine biosynthesis. Functionally, catalyzes the second two steps of the methylation pathway of phosphatidylcholine biosynthesis, the SAM-dependent methylation of phosphatidylmonomethylethanolamine (PMME) to phosphatidyldimethylethanolamine (PDME) and of PDME to phosphatidylcholine (PC). The chain is Phosphatidyl-N-methylethanolamine N-methyltransferase (PLMT) from Arabidopsis thaliana (Mouse-ear cress).